The primary structure comprises 426 residues: Serine--tRNA ligase (426 aa).

231–233 serves as a coordination point for L-serine; that stretch reads TSE. 262 to 264 contributes to the ATP binding site; the sequence is RSE. Glu285 contributes to the L-serine binding site. 349–352 is a binding site for ATP; the sequence is EISS. Ser385 contributes to the L-serine binding site.

Belongs to the class-II aminoacyl-tRNA synthetase family. Type-1 seryl-tRNA synthetase subfamily. As to quaternary structure, homodimer. The tRNA molecule binds across the dimer.

The protein localises to the cytoplasm. It catalyses the reaction tRNA(Ser) + L-serine + ATP = L-seryl-tRNA(Ser) + AMP + diphosphate + H(+). It carries out the reaction tRNA(Sec) + L-serine + ATP = L-seryl-tRNA(Sec) + AMP + diphosphate + H(+). It functions in the pathway aminoacyl-tRNA biosynthesis; selenocysteinyl-tRNA(Sec) biosynthesis; L-seryl-tRNA(Sec) from L-serine and tRNA(Sec): step 1/1. Catalyzes the attachment of serine to tRNA(Ser). Is also able to aminoacylate tRNA(Sec) with serine, to form the misacylated tRNA L-seryl-tRNA(Sec), which will be further converted into selenocysteinyl-tRNA(Sec). This Legionella pneumophila (strain Paris) protein is Serine--tRNA ligase.